The primary structure comprises 281 residues: Protein-S-isoprenylcysteine O-methyltransferase (281 aa).

Residues 1-2 lie on the Cytoplasmic side of the membrane; that stretch reads ML. The chain crosses the membrane as a helical span at residues 3 to 29; sequence SPAGKISLQSFTGSSLVFFVICMFNHY. Over 30–35 the chain is Lumenal; sequence YGITNL. The helical transmembrane segment at 36–53 threads the bilayer; the sequence is VVNTLIVFFYAVNVYFFL. Topologically, residues 54 to 58 are cytoplasmic; it reads KFFYN. A helical transmembrane segment spans residues 59-85; that stretch reads EFAFAIAIRAAFLGLVLVLGLYIKLVA. Residues 86–88 are Lumenal-facing; the sequence is PPN. A helical membrane pass occupies residues 89–113; it reads IQIFGGYMSVMALFHYSEFLAIAIV. Residues 114–118 are Cytoplasmic-facing; it reads QPKQV. The chain crosses the membrane as a helical span at residues 119 to 149; that stretch reads STDSFVINHSPQYTIAAVSSWVEFFIETYFF. The Lumenal portion of the chain corresponds to 150 to 155; that stretch reads PGLKEI. The helical transmembrane segment at 156–181 threads the bilayer; the sequence is HWLSNIGLCVCILGEVLRKTAILTAG. Residues 182–208 are Cytoplasmic-facing; sequence SNFNHLVQCEKSSDHVLVTHGVYAWFR. S-adenosyl-L-methionine contacts are provided by residues glutamine 189, 196-199, tyrosine 204, and 209-212; these read HVLV and HPSY. A helical membrane pass occupies residues 209–226; it reads HPSYVGWFYWSIGTQIIL. Residues 227–229 lie on the Lumenal side of the membrane; it reads INP. A helical transmembrane segment spans residues 230–243; that stretch reads LCIPAYTLASWMFF. The Cytoplasmic segment spans residues 244-281; it reads KERIYIEESMLLSFFGQQYCDYQQQVGTGIPFIEGYKI. Arginine 246 lines the substrate pocket. Glutamate 250 contacts S-adenosyl-L-methionine.

Belongs to the class VI-like SAM-binding methyltransferase superfamily. Isoprenylcysteine carboxyl methyltransferase family.

It is found in the endoplasmic reticulum membrane. The catalysed reaction is [protein]-C-terminal S-[(2E,6E)-farnesyl]-L-cysteine + S-adenosyl-L-methionine = [protein]-C-terminal S-[(2E,6E)-farnesyl]-L-cysteine methyl ester + S-adenosyl-L-homocysteine. Functionally, catalyzes the post-translational methylation of isoprenylated C-terminal cysteine residues. This Tribolium castaneum (Red flour beetle) protein is Protein-S-isoprenylcysteine O-methyltransferase.